The sequence spans 165 residues: Transcriptional repressor NrdR (165 aa).

Residues 3–34 fold into a zinc finger; the sequence is CPYCGQLNNRVVDSRLSRSEFAVRRRRECLDC. In terms of domain architecture, ATP-cone spans 49-139; sequence VMVVKKDGRR…VYREFKDVDD (91 aa).

The protein belongs to the NrdR family. It depends on Zn(2+) as a cofactor.

Negatively regulates transcription of bacterial ribonucleotide reductase nrd genes and operons by binding to NrdR-boxes. This Desulforapulum autotrophicum (strain ATCC 43914 / DSM 3382 / VKM B-1955 / HRM2) (Desulfobacterium autotrophicum) protein is Transcriptional repressor NrdR.